The chain runs to 115 residues: Nucleoid-associated protein alr5067 (115 aa).

It belongs to the YbaB/EbfC family. As to quaternary structure, homodimer.

The protein resides in the cytoplasm. It is found in the nucleoid. In terms of biological role, binds to DNA and alters its conformation. May be involved in regulation of gene expression, nucleoid organization and DNA protection. The protein is Nucleoid-associated protein alr5067 of Nostoc sp. (strain PCC 7120 / SAG 25.82 / UTEX 2576).